The primary structure comprises 524 residues: Bifunctional purine biosynthesis protein PurH (524 aa).

The MGS-like domain maps to 1-144; it reads MTRRALVSVS…KNSAHVGVVV (144 aa).

The protein belongs to the PurH family.

The catalysed reaction is (6R)-10-formyltetrahydrofolate + 5-amino-1-(5-phospho-beta-D-ribosyl)imidazole-4-carboxamide = 5-formamido-1-(5-phospho-D-ribosyl)imidazole-4-carboxamide + (6S)-5,6,7,8-tetrahydrofolate. It catalyses the reaction IMP + H2O = 5-formamido-1-(5-phospho-D-ribosyl)imidazole-4-carboxamide. The protein operates within purine metabolism; IMP biosynthesis via de novo pathway; 5-formamido-1-(5-phospho-D-ribosyl)imidazole-4-carboxamide from 5-amino-1-(5-phospho-D-ribosyl)imidazole-4-carboxamide (10-formyl THF route): step 1/1. Its pathway is purine metabolism; IMP biosynthesis via de novo pathway; IMP from 5-formamido-1-(5-phospho-D-ribosyl)imidazole-4-carboxamide: step 1/1. In Anaeromyxobacter sp. (strain K), this protein is Bifunctional purine biosynthesis protein PurH.